We begin with the raw amino-acid sequence, 147 residues long: Hemoglobin subunit beta (147 aa).

An N-acetylvaline modification is found at V2. In terms of domain architecture, Globin spans 3–147 (HLTGEEKSAV…VANALAHKYH (145 aa)). T13 carries the phosphothreonine modification. A Phosphoserine modification is found at S45. K60 carries the N6-acetyllysine modification. Residue H64 coordinates heme b. K83 is subject to N6-acetyllysine. A heme b-binding site is contributed by H93. At C94 the chain carries S-nitrosocysteine. N6-acetyllysine is present on K145.

It belongs to the globin family. In terms of assembly, heterotetramer of two alpha chains and two beta chains. Red blood cells.

Functionally, involved in oxygen transport from the lung to the various peripheral tissues. The sequence is that of Hemoglobin subunit beta (HBB) from Ateles paniscus (Black spider monkey).